The following is a 122-amino-acid chain: Interferon alpha-inducible protein 27, mitochondrial (122 aa).

The N-terminal 33 residues, 1–33, are a transit peptide targeting the mitochondrion; sequence MEASALTSSAVTSVAKVVRVASGSAVVLPLARI. The helical transmembrane segment at 34-57 threads the bilayer; it reads ATVVIGGVVAMAAVPMVLSAMGFT. Lysine 69 is covalently cross-linked (Glycyl lysine isopeptide (Lys-Gly) (interchain with G-Cter in ubiquitin)). 2 consecutive transmembrane segments (helical) span residues 71–91 and 99–119; these read MSAA…VATL and LSGL…AVIA. Residues 76–122 form a mediates interaction with SKP2 and hepatitis C virus non-structural protein NS5A region; sequence IANGGGVASGSLVATLQSLGATGLSGLTKFILGSIGSAIAAVIARFY. The interval 103–112 is required for hepatitis C virus non-structural protein NS5A degradation; sequence TKFILGSIGS.

It belongs to the IFI6/IFI27 family. In terms of assembly, homodimer. Interacts with hepatitis C virus/HCV non-structural protein NS5A; promotes the ubiquitin-mediated proteasomal degradation of NS5A. Interacts with SKP2; promotes the ubiquitin-mediated proteasomal degradation of NS5A. Interacts with NR4A1. May interact with BCL2. Ubiquitinated by TRIM21 via 'Lys-6'-linked ubiquitin chains leading to IFI27 mitochondrial migration.

Its subcellular location is the mitochondrion membrane. It is found in the nucleus inner membrane. The protein resides in the endoplasmic reticulum membrane. In terms of biological role, probable adapter protein involved in different biological processes. Part of the signaling pathways that lead to apoptosis. Involved in type-I interferon-induced apoptosis characterized by a rapid and robust release of cytochrome C from the mitochondria and activation of BAX and caspases 2, 3, 6, 8 and 9. Also functions in TNFSF10-induced apoptosis. May also have a function in the nucleus, where it may be involved in the interferon-induced negative regulation of the transcriptional activity of NR4A1, NR4A2 and NR4A3 through the enhancement of XPO1-mediated nuclear export of these nuclear receptors. May thereby play a role in the vascular response to injury. In the innate immune response, has an antiviral activity towards hepatitis C virus/HCV. May prevent the replication of the virus by recruiting both the hepatitis C virus non-structural protein 5A/NS5A and the ubiquitination machinery via SKP2, promoting the ubiquitin-mediated proteasomal degradation of NS5A. Also promotes virus-induced pyroptosis by activating CASP3 in the mitochondria after 'Lys-6'-linked ubiquitination by TRIM21. The polypeptide is Interferon alpha-inducible protein 27, mitochondrial (Homo sapiens (Human)).